A 202-amino-acid chain; its full sequence is 3-isopropylmalate dehydratase small subunit (202 aa).

This sequence belongs to the LeuD family. LeuD type 1 subfamily. As to quaternary structure, heterodimer of LeuC and LeuD.

The enzyme catalyses (2R,3S)-3-isopropylmalate = (2S)-2-isopropylmalate. Its pathway is amino-acid biosynthesis; L-leucine biosynthesis; L-leucine from 3-methyl-2-oxobutanoate: step 2/4. Its function is as follows. Catalyzes the isomerization between 2-isopropylmalate and 3-isopropylmalate, via the formation of 2-isopropylmaleate. This Rhizobium johnstonii (strain DSM 114642 / LMG 32736 / 3841) (Rhizobium leguminosarum bv. viciae) protein is 3-isopropylmalate dehydratase small subunit.